Reading from the N-terminus, the 435-residue chain is Eukaryotic translation initiation factor 3 subunit E (435 aa).

One can recognise a PCI domain in the interval 219 to 392 (FFNHAKGRDL…GHVVMGTQPL (174 aa)).

It belongs to the eIF-3 subunit E family. In terms of assembly, component of the eukaryotic translation initiation factor 3 (eIF-3) complex.

The protein resides in the cytoplasm. In terms of biological role, component of the eukaryotic translation initiation factor 3 (eIF-3) complex, which is involved in protein synthesis of a specialized repertoire of mRNAs and, together with other initiation factors, stimulates binding of mRNA and methionyl-tRNAi to the 40S ribosome. The eIF-3 complex specifically targets and initiates translation of a subset of mRNAs involved in cell proliferation. This chain is Eukaryotic translation initiation factor 3 subunit E (eIF3-S6), found in Aedes aegypti (Yellowfever mosquito).